Reading from the N-terminus, the 344-residue chain is Probable electron transfer flavoprotein subunit alpha, mitochondrial (344 aa).

284-312 (LYIAIGVSGAVQHLAGMKDSKVIVAINND) provides a ligand contact to FAD.

This sequence belongs to the ETF alpha-subunit/FixB family. In terms of assembly, heterodimer of an alpha and a beta subunit. The cofactor is FAD.

Its subcellular location is the mitochondrion matrix. Its function is as follows. The electron transfer flavoprotein serves as a specific electron acceptor for several dehydrogenases, including five acyl-CoA dehydrogenases, glutaryl-CoA and sarcosine dehydrogenase. It transfers the electrons to the main mitochondrial respiratory chain via ETF-ubiquinone oxidoreductase (ETF dehydrogenase). This chain is Probable electron transfer flavoprotein subunit alpha, mitochondrial (AIM45), found in Saccharomyces cerevisiae (strain ATCC 204508 / S288c) (Baker's yeast).